The chain runs to 402 residues: Olfactomedin-like protein 1 (402 aa).

The signal sequence occupies residues 1 to 28 (MMVALRGASALLVLFLAAFLPPPQCTQD). The N-linked (GlcNAc...) asparagine glycan is linked to Asn-66. Positions 79-133 (SEYKSAVGNLALRVERAQREIDYIQYLREADECIESEDKTLAEMLLQEAEEEKKI) form a coiled coil. Residues Asn-138 and Asn-183 are each glycosylated (N-linked (GlcNAc...) asparagine). Residues 140-397 (SCDNMLMGIK…QIIYKLQTKR (258 aa)) enclose the Olfactomedin-like domain. Cys-141 and Cys-324 are oxidised to a cystine.

In terms of processing, highly N-glycosylated. Mainly expressed in the small intestine, liver, lung and heart.

It is found in the secreted. The sequence is that of Olfactomedin-like protein 1 (OLFML1) from Homo sapiens (Human).